A 254-amino-acid polypeptide reads, in one-letter code: Probable triosephosphate isomerase 2 (254 aa).

A substrate-binding site is contributed by 9 to 11; that stretch reads NMK. The active-site Electrophile is His-96. Glu-168 acts as the Proton acceptor in catalysis. 2 residues coordinate substrate: Gly-174 and Ser-212.

The protein belongs to the triosephosphate isomerase family. As to quaternary structure, homodimer.

The protein resides in the cytoplasm. The enzyme catalyses D-glyceraldehyde 3-phosphate = dihydroxyacetone phosphate. It functions in the pathway carbohydrate biosynthesis; gluconeogenesis. Its pathway is carbohydrate degradation; glycolysis; D-glyceraldehyde 3-phosphate from glycerone phosphate: step 1/1. Functionally, involved in the gluconeogenesis. Catalyzes stereospecifically the conversion of dihydroxyacetone phosphate (DHAP) to D-glyceraldehyde-3-phosphate (G3P). The chain is Probable triosephosphate isomerase 2 from Listeria monocytogenes serovar 1/2a (strain ATCC BAA-679 / EGD-e).